Reading from the N-terminus, the 126-residue chain is Membrane-anchored ubiquitin-fold protein 2 (126 aa).

In terms of domain architecture, Ubiquitin-like spans 14–79; it reads VEVRFRLDDG…VLENNRTLAE (66 aa). At Cys-123 the chain carries Cysteine methyl ester. Cys-123 is lipidated: S-geranylgeranyl cysteine. The propeptide at 124 to 126 is removed in mature form; sequence TIL.

Its subcellular location is the cell membrane. May serve as docking site to facilitate the association of other proteins to the plasma membrane. This chain is Membrane-anchored ubiquitin-fold protein 2 (MUB2), found in Oryza sativa subsp. japonica (Rice).